An 86-amino-acid polypeptide reads, in one-letter code: Putative membrane protein insertion efficiency factor (86 aa).

Residues 64 to 86 (GVDPVPKKSSSKTSTTACGCGHS) form a disordered region. Residues 70 to 79 (KKSSSKTSTT) are compositionally biased toward low complexity.

It belongs to the UPF0161 family.

The protein localises to the cell inner membrane. In terms of biological role, could be involved in insertion of integral membrane proteins into the membrane. This chain is Putative membrane protein insertion efficiency factor, found in Janthinobacterium sp. (strain Marseille) (Minibacterium massiliensis).